Here is a 152-residue protein sequence, read N- to C-terminus: Aspartate carbamoyltransferase regulatory chain (152 aa).

Zn(2+)-binding residues include cysteine 109, cysteine 114, cysteine 138, and cysteine 141.

It belongs to the PyrI family. As to quaternary structure, contains catalytic and regulatory chains. It depends on Zn(2+) as a cofactor.

In terms of biological role, involved in allosteric regulation of aspartate carbamoyltransferase. This chain is Aspartate carbamoyltransferase regulatory chain, found in Thermoplasma volcanium (strain ATCC 51530 / DSM 4299 / JCM 9571 / NBRC 15438 / GSS1).